The chain runs to 60 residues: Large ribosomal subunit protein bL32 (60 aa).

The interval 1–23 is disordered; the sequence is MAVPRNRHSNARKNIRRSHHAKK.

This sequence belongs to the bacterial ribosomal protein bL32 family.

The chain is Large ribosomal subunit protein bL32 from Chlamydia caviae (strain ATCC VR-813 / DSM 19441 / 03DC25 / GPIC) (Chlamydophila caviae).